We begin with the raw amino-acid sequence, 269 residues long: Cytochrome c oxidase subunit 3 (269 aa).

Transmembrane regions (helical) follow at residues glycine 7–serine 29, isoleucine 51–alanine 71, glycine 90–leucine 110, valine 127–alanine 147, threonine 167–leucine 187, phenylalanine 205–isoleucine 225, and isoleucine 247–tryptophan 267.

The protein belongs to the cytochrome c oxidase subunit 3 family. As to quaternary structure, component of the cytochrome c oxidase (complex IV, CIV), a multisubunit enzyme composed of a catalytic core of 3 subunits and several supernumerary subunits. The complex exists as a monomer or a dimer and forms supercomplexes (SCs) in the inner mitochondrial membrane with ubiquinol-cytochrome c oxidoreductase (cytochrome b-c1 complex, complex III, CIII).

The protein resides in the mitochondrion inner membrane. The enzyme catalyses 4 Fe(II)-[cytochrome c] + O2 + 8 H(+)(in) = 4 Fe(III)-[cytochrome c] + 2 H2O + 4 H(+)(out). Functionally, component of the cytochrome c oxidase, the last enzyme in the mitochondrial electron transport chain which drives oxidative phosphorylation. The respiratory chain contains 3 multisubunit complexes succinate dehydrogenase (complex II, CII), ubiquinol-cytochrome c oxidoreductase (cytochrome b-c1 complex, complex III, CIII) and cytochrome c oxidase (complex IV, CIV), that cooperate to transfer electrons derived from NADH and succinate to molecular oxygen, creating an electrochemical gradient over the inner membrane that drives transmembrane transport and the ATP synthase. Cytochrome c oxidase is the component of the respiratory chain that catalyzes the reduction of oxygen to water. Electrons originating from reduced cytochrome c in the intermembrane space (IMS) are transferred via the dinuclear copper A center (CU(A)) of subunit 2 and heme A of subunit 1 to the active site in subunit 1, a binuclear center (BNC) formed by heme A3 and copper B (CU(B)). The BNC reduces molecular oxygen to 2 water molecules using 4 electrons from cytochrome c in the IMS and 4 protons from the mitochondrial matrix. The protein is Cytochrome c oxidase subunit 3 (COX3) of Candida parapsilosis (Yeast).